The following is a 337-amino-acid chain: C5a anaphylatoxin chemotactic receptor 2 (337 aa).

Residues 1 to 38 (MGNDSVSYEYGDYSDLSDRPVDCLDGACLAIDPLRVAP) are Extracellular-facing. An N-linked (GlcNAc...) asparagine glycan is attached at N3. The helical transmembrane segment at 39-61 (LPLYAAIFLVGVPGNAMVAWVAG) threads the bilayer. At 62–72 (KVARRRVGATW) the chain is on the cytoplasmic side. The helical transmembrane segment at 73–95 (LLHLAVADLLCCLSLPILAVPIA) threads the bilayer. The Extracellular segment spans residues 96–114 (RGGHWPYGAVGCRALPSII). The cysteines at positions 107 and 186 are disulfide-linked. Residues 115-137 (LLTMYASVLLLAALSADLCFLAL) form a helical membrane-spanning segment. The Cytoplasmic segment spans residues 138 to 149 (GPAWWSTVQRAC). A helical transmembrane segment spans residues 150-172 (GVQVACGAAWTLALLLTVPSAIY). At 173 to 202 (RRLHQEHFPARLQCVVDYGGSSSTENAVTA) the chain is on the extracellular side. Residues 203 to 225 (IRFLFGFLGPLVAVASCHSALLC) traverse the membrane as a helical segment. Residues 226 to 237 (WAARRCRPLGTA) are Cytoplasmic-facing. A helical membrane pass occupies residues 238–260 (IVVGFFVCWAPYHLLGLVLTVAA). The Extracellular portion of the chain corresponds to 261 to 274 (PNSALLARALRAEP). Residues 275–294 (LIVGLALAHSCLNPMLFLYF) traverse the membrane as a helical segment. At 295–337 (GRAQLRRSLPAACHWALRESQGQDESVDSKKSTSHDLVSEMEV) the chain is on the cytoplasmic side. A Phosphoserine modification is found at S320.

This sequence belongs to the G-protein coupled receptor 1 family. In terms of assembly, interacts with C3 (the anaphylatoxin peptide C3a and the adipogenic hormone ASP); the interaction occurs with higher affinity for ASP, enhancing the phosphorylation and activation of GPR77, recruitment of ARRB2 to the cell surface and endocytosis of GRP77. Frontal cortex, hippocampus, hypothalamus, pons and liver.

It is found in the cell membrane. In terms of biological role, receptor for the chemotactic and inflammatory C3a, C4a and C5a anaphylatoxin peptides and also for their dearginated forms ASP/C3adesArg, C4adesArg and C5adesArg respectively. Couples weakly to G(i)-mediated signaling pathways. This is C5a anaphylatoxin chemotactic receptor 2 (C5AR2) from Homo sapiens (Human).